The chain runs to 554 residues: Protein SINE2 (554 aa).

The segment at 17–290 (DKDPDSHKTA…MAAHETMRQA (274 aa)) is ARMADILLO-type fold. 3 disordered regions span residues 306–332 (CKPR…VYSR), 411–442 (NESV…KHHR), and 465–487 (ETSS…TTED). The segment covering 311-321 (SLSGSVKSTSS) has biased composition (low complexity). Positions 322–332 (LREHDGSVYSR) are enriched in basic and acidic residues. Residues 419–431 (NRSRSSRRNTKKR) show a composition bias toward basic residues. Low complexity predominate over residues 465–485 (ETSSSSSIYDTSGTTTPTNTT). In terms of domain architecture, KASH spans 509 to 554 (LDPRLGRSKGVLKLGLSVFSIAVAGFASFMWMYLQDDMMPPHLVPT). Residues 522–542 (LGLSVFSIAVAGFASFMWMYL) traverse the membrane as a helical segment. The short motif at 551 to 554 (LVPT) is the Required for nuclear localization element.

In terms of assembly, interacts with SUN1 and SUN2. As to expression, expressed in epidermal cells, mesophyll cells, trichomes and root cells.

Its subcellular location is the nucleus membrane. Functionally, plays a role in innate immunity against the oomycete pathogen A.arabidopsidis (Hpa). The protein is Protein SINE2 of Arabidopsis thaliana (Mouse-ear cress).